A 279-amino-acid polypeptide reads, in one-letter code: MESELRKLIRPIIENKISNFLNSPEYQFLEPHVSKDITDIIDEAPLPTIRSNSCNCEDDVCPHKSVINPLYFYVLNSYISKHITYRKKFHEAFNPKFFPLHFHDTLKNSFPQKNFDVYHRLSIKFSVQKEETFELNFDYDLFEGMEFSPDTEYPVIVSLECNGLISHITIDKGSFLADNFYIPMVLIPYSRIKLMFNKNINGRMICGYFSNVIRSDLCLQKKDLIDDKIVLWFKFDKDYALQINGGTLMFFDDLETFGPRKQIEVIRLRSSNNPDNDKN.

This is an uncharacterized protein from Acanthamoeba polyphaga (Amoeba).